Here is a 256-residue protein sequence, read N- to C-terminus: Dihydroorotate dehydrogenase B (NAD(+)), electron transfer subunit (256 aa).

The FAD-binding FR-type domain occupies 1 to 101 (MKKAHLTVQS…LGPLGNGFPV (101 aa)). Residues 52–55 (RPLS), 69–71 (IYR), and 76–77 (GT) each bind FAD. The [2Fe-2S] cluster site is built by C220, C225, C228, and C243.

Belongs to the PyrK family. In terms of assembly, heterotetramer of 2 PyrK and 2 PyrD type B subunits. The cofactor is [2Fe-2S] cluster. FAD is required as a cofactor.

It participates in pyrimidine metabolism; UMP biosynthesis via de novo pathway; orotate from (S)-dihydroorotate (NAD(+) route): step 1/1. Its function is as follows. Responsible for channeling the electrons from the oxidation of dihydroorotate from the FMN redox center in the PyrD type B subunit to the ultimate electron acceptor NAD(+). In Bacillus velezensis (strain DSM 23117 / BGSC 10A6 / LMG 26770 / FZB42) (Bacillus amyloliquefaciens subsp. plantarum), this protein is Dihydroorotate dehydrogenase B (NAD(+)), electron transfer subunit.